Consider the following 558-residue polypeptide: Dihydroxy-acid dehydratase (558 aa).

[2Fe-2S] cluster is bound at residue cysteine 50. A Mg(2+)-binding site is contributed by aspartate 82. Cysteine 123 provides a ligand contact to [2Fe-2S] cluster. Residues aspartate 124 and lysine 125 each contribute to the Mg(2+) site. An N6-carboxylysine modification is found at lysine 125. Position 195 (cysteine 195) interacts with [2Fe-2S] cluster. Position 447 (glutamate 447) interacts with Mg(2+). Catalysis depends on serine 472, which acts as the Proton acceptor.

It belongs to the IlvD/Edd family. In terms of assembly, homodimer. Requires [2Fe-2S] cluster as cofactor. Mg(2+) serves as cofactor.

It carries out the reaction (2R)-2,3-dihydroxy-3-methylbutanoate = 3-methyl-2-oxobutanoate + H2O. The enzyme catalyses (2R,3R)-2,3-dihydroxy-3-methylpentanoate = (S)-3-methyl-2-oxopentanoate + H2O. It participates in amino-acid biosynthesis; L-isoleucine biosynthesis; L-isoleucine from 2-oxobutanoate: step 3/4. It functions in the pathway amino-acid biosynthesis; L-valine biosynthesis; L-valine from pyruvate: step 3/4. Functionally, functions in the biosynthesis of branched-chain amino acids. Catalyzes the dehydration of (2R,3R)-2,3-dihydroxy-3-methylpentanoate (2,3-dihydroxy-3-methylvalerate) into 2-oxo-3-methylpentanoate (2-oxo-3-methylvalerate) and of (2R)-2,3-dihydroxy-3-methylbutanoate (2,3-dihydroxyisovalerate) into 2-oxo-3-methylbutanoate (2-oxoisovalerate), the penultimate precursor to L-isoleucine and L-valine, respectively. The chain is Dihydroxy-acid dehydratase from Saccharolobus islandicus (strain L.S.2.15 / Lassen #1) (Sulfolobus islandicus).